The sequence spans 296 residues: NADPH-dependent 1-acyldihydroxyacetone phosphate reductase (296 aa).

Ile9 contacts NADP(+). The GXSXG signature appears at 11–15 (GCSEG). The NADP(+) site is built by Thr35, Arg41, Asp56, Asn84, Lys117, Tyr148, Lys152, Val181, and Thr183. Tyr148 functions as the Proton donor in the catalytic mechanism. Lys152 (lowers pKa of active site Tyr) is an active-site residue.

It belongs to the short-chain dehydrogenases/reductases (SDR) family.

Its subcellular location is the lipid droplet. It localises to the cytoplasm. It is found in the vacuole. The protein resides in the endoplasmic reticulum. The protein localises to the golgi apparatus. Its subcellular location is the mitochondrion outer membrane. It catalyses the reaction 1-hexadecanoyl-sn-glycero-3-phosphate + NADP(+) = 1-hexadecanoylglycerone 3-phosphate + NADPH + H(+). The enzyme catalyses a 1-acylglycerone 3-phosphate + NADPH + H(+) = a 1-acyl-sn-glycero-3-phosphate + NADP(+). The catalysed reaction is a triacylglycerol + H2O = a diacylglycerol + a fatty acid + H(+). Its function is as follows. Can convert acyl and alkyl dihydroxyacetone-phosphate (DHAP) into glycerolipids and ether lipids, respectively. Required for the biosynthesis of phosphatidic acid via the DHAP pathway, where it reduces 1-acyl DHAP to lysophosphatidic acid (LPA). Also has triacylglycerol (TAG) lipase activity. Involved in the mobilization of the non-polar storage lipids triacylglycerols (TAGs) from lipid particles by hydrolysis of TAGs. Lipolysis of TAG by AYR1 is essential for starvation-induced autophagy. Forms an NADPH-regulated cation-selective channel in the mitochondrial outer membrane. This is NADPH-dependent 1-acyldihydroxyacetone phosphate reductase (ayr1) from Schizosaccharomyces pombe (strain 972 / ATCC 24843) (Fission yeast).